A 1405-amino-acid chain; its full sequence is MGSEPKPYAQPLDSAAAASTTKGSCGPRKPENPDFFSTVEDEQEDGFLRHLSESTEDFSLDMGALQGSEYLRDLGLGAPSDLHQSEVIMDPETHRQEARRESSHTSCEGASALPQRRSWERSRSCSGSCRRLSLDASTVDKGACLPRTLASLALNLSGNGQKIWTQGCLPVSGTPAPSSKECSSPEKRLRSKSVPVSCEISCMELASDSDVCTSPVQGLEPPVLECLEKDHVEPEHVLIVQQVLQELRQYHGARQRARMSTSPGGAHSNLTWFEFLSESEDGACKIEKPGKSTRVKRSLSSLRSRVTRQKEKGKSPAHLKDKTQDLPGKRECVNGHQLMRGTFSGHSSCPLCGEPLLNSASLKEHPRTTLLSDGSSPAPSRNVGMTISQKGGLQPTPSPAGSGVRLGPIAGDMDEADSVFLKLKQTADDSLSLTSSNAESVFIEDPYIASLRCEIESDAHEFEAESWSLSVDLAYAKKQKKEVVKRQDVLYELMQTEAHHVRTLKIMLKVYSRALQEELQFSGQAVSRLFPCADDLLDMHSHFLARLKERRQEFLEEGSDRNYVIQKIGDVLVQQFSGETGERMKEKYAVFCSGHNDAVGQYKLLLQQSKKFQNLIKKIGNFSIVRRLGVQECILLVTQRITKYPVLVERIIQNTEAGTEDYKDLSQALSLIKDIISQVDAKVSEYEKDQRLKEIAAKTDQKSSGKLKNGLTFRKEDMLQQRQLHLEGALCWKSTSGRLKDVLAVLLTDVLLLLQEKDQKYVFASVDSKPPVISLQKLIVREVANEEKAMFLISASMQGPEMYEMYTSSKEDRNIWMAHIRRAVESCPDEEEDVFSEAEEKKIAEARTMKLQEFQERLSLKDQLIAQSLLEKQQIYLEMAQLSGLEESAQNRGLFRGGGDPSETLRGEQILRSAMSEIEGIQSLICQRHLGSTSSQVEEGSVSAGLPRRAETFGGYDSVGSPSKGGSFKRKVSNSDLRPQDWQGPASSPDSRPCDNSAPSGCCEESPQAVEMPSTESLPTVLELELVHRVQTLSQLLLSLQAVIAQQDSYVEMQRTAIQEREKQFRLQSTRGNLLLEQERQRNFEKQREERAGVEKLQSQLRQEQQRWERERARQQQELELAGARLQEREGEARQMRQRLDQERTELERQRQAYQHDLERLREAQRAVDRERERLELLRRFKKQNTVPGALPPEVLAEAQPASHPPSFNGDGLEGHSAPAKAPGTQGSAMLHGTGPDNVERPEVARWDSAPPESRPAKSDVPIQLLSATNQIQRQTAVQQQIPTKLAASTKGGKEKGSKSRGSQRWESSASFDLKQQLLLSKFIGKDESASRNRRSLSPVLPAAHGSAPASDPCFPAPSPAPAATPPEAFKFGGTSLPPVSPASSLPTTPLATTDEVSKEDVIFF.

Disordered stretches follow at residues methionine 1–phenylalanine 47, glutamate 92–glutamine 115, and proline 289–arginine 330. 2 stretches are compositionally biased toward basic and acidic residues: residues glutamate 92–serine 103 and arginine 308–arginine 330. Residues serine 347–serine 372 form a C2H2-type; degenerate zinc finger. One can recognise a DH domain in the interval lysine 485–lysine 682. A PH domain is found at glutamine 723–glutamate 825. Residues glutamine 936–glutamate 1016 form a disordered region. Threonine 952 is modified (phosphothreonine). Phosphoserine is present on serine 961. A coiled-coil region spans residues phenylalanine 1084–phenylalanine 1181. Disordered regions lie at residues glutamate 1198–proline 1242, arginine 1274–serine 1309, and glutamate 1328–phenylalanine 1405. A phosphoserine mark is found at serine 1336 and serine 1338. Positions phenylalanine 1355–threonine 1365 are enriched in pro residues. Residues threonine 1375–threonine 1394 are compositionally biased toward low complexity. The span at glutamate 1396 to phenylalanine 1405 shows a compositional bias: basic and acidic residues.

Interacts with SEPT9; interaction may inhibit GEF activity. Interacts with Gbetagamma subunits GNB1 and GNG2. Interacts with EPB41L4B. Interacts with PATJ (via C-terminus).

The protein localises to the cytoplasm. It is found in the cytoskeleton. Its subcellular location is the cell membrane. The protein resides in the apical cell membrane. Functionally, acts as a guanine nucleotide exchange factor (GEF) for RhoA GTPases. May play a role in actin cytoskeleton reorganization in different tissues since its activation induces formation of actin stress fibers. Also acts as a GEF for RAC1, inducing production of reactive oxygen species (ROS). Does not act as a GEF for CDC42. The G protein beta-gamma (Gbetagamma) subunits of heterotrimeric G proteins act as activators, explaining the integrated effects of LPA and other G-protein coupled receptor agonists on actin stress fiber formation, cell shape change and ROS production. Required for EPB41L4B-mediated regulation of the circumferential actomyosin belt in epithelial cells. The polypeptide is Rho guanine nucleotide exchange factor 18 (Arhgef18) (Mus musculus (Mouse)).